A 126-amino-acid chain; its full sequence is Fluoride-specific ion channel FluC (126 aa).

The next 4 membrane-spanning stretches (helical) occupy residues 4-24 (SILA…FLGI), 35-55 (LGTF…VAGF), 68-88 (FVIT…AEVV), and 103-123 (IVIH…TVSL). Residues G75 and S78 each contribute to the Na(+) site.

It belongs to the fluoride channel Fluc/FEX (TC 1.A.43) family.

It is found in the cell inner membrane. It carries out the reaction fluoride(in) = fluoride(out). Na(+) is not transported, but it plays an essential structural role and its presence is essential for fluoride channel function. In terms of biological role, fluoride-specific ion channel. Important for reducing fluoride concentration in the cell, thus reducing its toxicity. In Paraburkholderia xenovorans (strain LB400), this protein is Fluoride-specific ion channel FluC.